The sequence spans 124 residues: Small ribosomal subunit protein uS12 (124 aa).

Position 89 is a 3-methylthioaspartic acid (Asp-89).

It belongs to the universal ribosomal protein uS12 family. As to quaternary structure, part of the 30S ribosomal subunit. Contacts proteins S8 and S17. May interact with IF1 in the 30S initiation complex.

Its function is as follows. With S4 and S5 plays an important role in translational accuracy. In terms of biological role, interacts with and stabilizes bases of the 16S rRNA that are involved in tRNA selection in the A site and with the mRNA backbone. Located at the interface of the 30S and 50S subunits, it traverses the body of the 30S subunit contacting proteins on the other side and probably holding the rRNA structure together. The combined cluster of proteins S8, S12 and S17 appears to hold together the shoulder and platform of the 30S subunit. This is Small ribosomal subunit protein uS12 from Hydrogenovibrio crunogenus (strain DSM 25203 / XCL-2) (Thiomicrospira crunogena).